The chain runs to 481 residues: DNA primase DnaG (481 aa).

The Toprim domain occupies 169–243 (DAILVVEGRA…DVDYVARAPD (75 aa)). Mg(2+) contacts are provided by Glu-175, Asp-217, and Asp-219. The interval 275-393 (RRRNKLAAQA…ARKEREPSEF (119 aa)) is disordered. A compositionally biased stretch (low complexity) spans 281–309 (AAQAAEKQAQAEAAQKAEAPAAAAPVQPQ). The span at 312 to 393 (YQQKEYPQRE…ARKEREPSEF (82 aa)) shows a compositional bias: basic and acidic residues.

It belongs to the archaeal DnaG primase family. As to quaternary structure, forms a ternary complex with MCM helicase and DNA. Component of the archaeal exosome complex. The cofactor is Mg(2+).

The enzyme catalyses ssDNA + n NTP = ssDNA/pppN(pN)n-1 hybrid + (n-1) diphosphate.. In terms of biological role, RNA polymerase that catalyzes the synthesis of short RNA molecules used as primers for DNA polymerase during DNA replication. Also part of the exosome, which is a complex involved in RNA degradation. Acts as a poly(A)-binding protein that enhances the interaction between heteromeric, adenine-rich transcripts and the exosome. This is DNA primase DnaG from Methanocella arvoryzae (strain DSM 22066 / NBRC 105507 / MRE50).